Consider the following 183-residue polypeptide: Capsid protein (183 aa).

The tract at residues 136–183 (NAPILSTLPETTVVRRRGRSPRRRTPSPRRRRSQSPRRRRSQSPASQC) is disordered. The segment covering 149–176 (VRRRGRSPRRRTPSPRRRRSQSPRRRRS) has biased composition (basic residues). 3 positions are modified to phosphoserine; by host: Ser-155, Ser-162, and Ser-170. Residues 155–161 (SPRRRTP) form a 1; half-length repeat. Residues 155 to 177 (SPRRRTPSPRRRRSQSPRRRRSQ) are 3 X 8 AA repeats of S-P-R-R-R-[PR]-S-Q. The short motif at 158–175 (RRTPSPRRRRSQSPRRRR) is the Bipartite nuclear localization signal element. 2 consecutive repeat copies span residues 162-169 (SPRRRRSQ) and 170-177 (SPRRRRSQ). Positions 177-183 (QSPASQC) are RNA binding.

The protein belongs to the orthohepadnavirus core antigen family. In terms of assembly, homodimerizes, then multimerizes. Interacts with cytosol exposed regions of viral L glycoprotein present in the reticulum-to-Golgi compartment. Interacts with human FLNB. Phosphorylated form interacts with host importin alpha; this interaction depends on the exposure of the NLS, which itself depends upon genome maturation and/or phosphorylation of the capsid protein. Interacts with host NUP153. In terms of processing, phosphorylated by host SRPK1, SRPK2, and maybe protein kinase C or GAPDH. Phosphorylation is critical for pregenomic RNA packaging. Protein kinase C phosphorylation is stimulated by HBx protein and may play a role in transport of the viral genome to the nucleus at the late step during the viral replication cycle.

Its subcellular location is the virion. It is found in the host cytoplasm. In terms of biological role, self assembles to form an icosahedral capsid. Most capsids appear to be large particles with an icosahedral symmetry of T=4 and consist of 240 copies of capsid protein, though a fraction forms smaller T=3 particles consisting of 180 capsid proteins. Entering capsids are transported along microtubules to the nucleus. Phosphorylation of the capsid is thought to induce exposure of nuclear localization signal in the C-terminal portion of the capsid protein that allows binding to the nuclear pore complex via the importin (karyopherin-) alpha and beta. Capsids are imported in intact form through the nuclear pore into the nuclear basket, where it probably binds NUP153. Only capsids that contain the mature viral genome can release the viral DNA and capsid protein into the nucleoplasm. Immature capsids get stuck in the basket. Capsids encapsulate the pre-genomic RNA and the P protein. Pre-genomic RNA is reverse-transcribed into DNA while the capsid is still in the cytoplasm. The capsid can then either be directed to the nucleus, providing more genomes for transcription, or bud through the endoplasmic reticulum to provide new virions. This Homo sapiens (Human) protein is Capsid protein.